The primary structure comprises 370 residues: Queuine tRNA-ribosyltransferase (370 aa).

Residue Asp89 is the Proton acceptor of the active site. Substrate contacts are provided by residues 89-93, Asp143, Gln185, and Gly212; that span reads DSGGF. The interval 243–249 is RNA binding; the sequence is GVGTPED. Asp262 (nucleophile) is an active-site residue. Residues 267 to 271 are RNA binding; important for wobble base 34 recognition; sequence TRNAR. 4 residues coordinate Zn(2+): Cys300, Cys302, Cys305, and His331.

It belongs to the queuine tRNA-ribosyltransferase family. In terms of assembly, homodimer. Within each dimer, one monomer is responsible for RNA recognition and catalysis, while the other monomer binds to the replacement base PreQ1. Zn(2+) is required as a cofactor.

The catalysed reaction is 7-aminomethyl-7-carbaguanine + guanosine(34) in tRNA = 7-aminomethyl-7-carbaguanosine(34) in tRNA + guanine. It functions in the pathway tRNA modification; tRNA-queuosine biosynthesis. Catalyzes the base-exchange of a guanine (G) residue with the queuine precursor 7-aminomethyl-7-deazaguanine (PreQ1) at position 34 (anticodon wobble position) in tRNAs with GU(N) anticodons (tRNA-Asp, -Asn, -His and -Tyr). Catalysis occurs through a double-displacement mechanism. The nucleophile active site attacks the C1' of nucleotide 34 to detach the guanine base from the RNA, forming a covalent enzyme-RNA intermediate. The proton acceptor active site deprotonates the incoming PreQ1, allowing a nucleophilic attack on the C1' of the ribose to form the product. After dissociation, two additional enzymatic reactions on the tRNA convert PreQ1 to queuine (Q), resulting in the hypermodified nucleoside queuosine (7-(((4,5-cis-dihydroxy-2-cyclopenten-1-yl)amino)methyl)-7-deazaguanosine). The chain is Queuine tRNA-ribosyltransferase from Methylobacillus flagellatus (strain ATCC 51484 / DSM 6875 / VKM B-1610 / KT).